Reading from the N-terminus, the 254-residue chain is Imidazole glycerol phosphate synthase subunit HisF (254 aa).

Active-site residues include aspartate 12 and aspartate 131.

It belongs to the HisA/HisF family. Heterodimer of HisH and HisF.

The protein localises to the cytoplasm. It catalyses the reaction 5-[(5-phospho-1-deoxy-D-ribulos-1-ylimino)methylamino]-1-(5-phospho-beta-D-ribosyl)imidazole-4-carboxamide + L-glutamine = D-erythro-1-(imidazol-4-yl)glycerol 3-phosphate + 5-amino-1-(5-phospho-beta-D-ribosyl)imidazole-4-carboxamide + L-glutamate + H(+). It functions in the pathway amino-acid biosynthesis; L-histidine biosynthesis; L-histidine from 5-phospho-alpha-D-ribose 1-diphosphate: step 5/9. In terms of biological role, IGPS catalyzes the conversion of PRFAR and glutamine to IGP, AICAR and glutamate. The HisF subunit catalyzes the cyclization activity that produces IGP and AICAR from PRFAR using the ammonia provided by the HisH subunit. The chain is Imidazole glycerol phosphate synthase subunit HisF from Leuconostoc mesenteroides subsp. mesenteroides (strain ATCC 8293 / DSM 20343 / BCRC 11652 / CCM 1803 / JCM 6124 / NCDO 523 / NBRC 100496 / NCIMB 8023 / NCTC 12954 / NRRL B-1118 / 37Y).